The sequence spans 499 residues: Eukaryotic peptide chain release factor GTP-binding subunit ERF3A (499 aa).

Residues 1–69 form a disordered region; the sequence is MELSEPIVEN…PKSVVAPPGA (69 aa). Positions 41–50 are enriched in basic and acidic residues; it reads RPPEESAHEM. The tr-type G domain maps to 72 to 298; it reads KEHVNVVFIG…DNLPNFNRSV (227 aa). Residues 81 to 88 are G1; that stretch reads GHVDAGKS. 84–89 serves as a coordination point for GTP; that stretch reads DAGKST. The G2 stretch occupies residues 137–141; it reads GKTVE. The interval 158-161 is G3; the sequence is DAPG. GTP contacts are provided by residues 220 to 223 and 262 to 264; these read NKMD and SGL. The tract at residues 220-223 is G4; the sequence is NKMD. The G5 stretch occupies residues 262–264; sequence SGL.

Belongs to the TRAFAC class translation factor GTPase superfamily. Classic translation factor GTPase family. ERF3 subfamily. Component of the eRF1-eRF3-GTP ternary complex, composed of ETF1/ERF1 and ERF3 (GSPT1/ERF3A or GSPT2/ERF3B) and GTP. Component of the transient SURF (SMG1-UPF1-eRF1-eRF3) complex. The ETF1-GSPT1 complex interacts with JMJD4. Interacts with PABPC1. Interacts with SHFL.

The catalysed reaction is GTP + H2O = GDP + phosphate + H(+). GTPase component of the eRF1-eRF3-GTP ternary complex, a ternary complex that mediates translation termination in response to the termination codons UAA, UAG and UGA. GSPT1/ERF3A mediates ETF1/ERF1 delivery to stop codons: The eRF1-eRF3-GTP complex binds to a stop codon in the ribosomal A-site. GTP hydrolysis by GSPT1/ERF3A induces a conformational change that leads to its dissociation, permitting ETF1/ERF1 to accommodate fully in the A-site. Component of the transient SURF complex which recruits UPF1 to stalled ribosomes in the context of nonsense-mediated decay (NMD) of mRNAs containing premature stop codons. Required for SHFL-mediated translation termination which inhibits programmed ribosomal frameshifting (-1PRF) of mRNA from viruses and cellular genes. This is Eukaryotic peptide chain release factor GTP-binding subunit ERF3A (GSPT1) from Homo sapiens (Human).